Reading from the N-terminus, the 1219-residue chain is Disease resistance-like protein DSC1 (1219 aa).

Positions 9–176 (AEFDVFLSFR…EIAVDTFKKL (168 aa)) constitute a TIR domain. Glu-83 is a catalytic residue. Residues 197–446 (LEKLLSWEDL…DIACFFRSEN (250 aa)) form the NB-ARC domain. Residue 216-222 (GMVGIGK) participates in ATP binding. 11 LRR repeats span residues 468 to 493 (LVDK…MAKE), 538 to 563 (TDKI…AFQG), 597 to 619 (PNEL…DFDP), 620 to 642 (KNLV…EKDV), 665 to 689 (AHNL…INCL), 690 to 713 (EKLI…IKTQ), 733 to 757 (SENV…QTFR), 759 to 780 (LALL…LYKL), 804 to 827 (MESL…MHLS), 854 to 877 (CSRL…IGGL), and 878 to 899 (SSLQ…SFNQ).

It belongs to the disease resistance NB-LRR family. As to quaternary structure, interacts with CAMTA3 and DSC2.

The enzyme catalyses NAD(+) + H2O = ADP-D-ribose + nicotinamide + H(+). Its function is as follows. TIR-NB-LRR receptor-like protein involved in plant defense. Acts as a trigger of hypersensitive response (HR). Functions as a guard of CAMTA3, a negative regulator of immunity, during pathogen infection. This is Disease resistance-like protein DSC1 from Arabidopsis thaliana (Mouse-ear cress).